The sequence spans 229 residues: Probable GTP-binding protein EngB (229 aa).

The region spanning 53–228 is the EngB-type G domain; that stretch reads DLPEVAFAGR…RAEIVRLCID (176 aa). GTP-binding positions include 61–68, 88–92, 106–109, 173–176, and 207–209; these read GRSNVGKS, GRTRE, DLPG, TKAD, and TSS. 2 residues coordinate Mg(2+): Ser-68 and Thr-90.

It belongs to the TRAFAC class TrmE-Era-EngA-EngB-Septin-like GTPase superfamily. EngB GTPase family. Mg(2+) is required as a cofactor.

In terms of biological role, necessary for normal cell division and for the maintenance of normal septation. This is Probable GTP-binding protein EngB from Caulobacter vibrioides (strain NA1000 / CB15N) (Caulobacter crescentus).